Consider the following 255-residue polypeptide: tRNA (guanine-N(7)-)-methyltransferase (255 aa).

The segment at 1 to 29 (MSDSDASRPSAIASDGPDAAGKHASGAPW) is disordered. E86, E111, D138, and D160 together coordinate S-adenosyl-L-methionine. Residue D160 is part of the active site. Substrate contacts are provided by residues K164, D196, and 233-236 (TRYE).

It belongs to the class I-like SAM-binding methyltransferase superfamily. TrmB family.

It catalyses the reaction guanosine(46) in tRNA + S-adenosyl-L-methionine = N(7)-methylguanosine(46) in tRNA + S-adenosyl-L-homocysteine. The protein operates within tRNA modification; N(7)-methylguanine-tRNA biosynthesis. Its function is as follows. Catalyzes the formation of N(7)-methylguanine at position 46 (m7G46) in tRNA. The polypeptide is tRNA (guanine-N(7)-)-methyltransferase (Ruegeria sp. (strain TM1040) (Silicibacter sp.)).